Reading from the N-terminus, the 342-residue chain is Anthranilate phosphoribosyltransferase (342 aa).

5-phospho-alpha-D-ribose 1-diphosphate contacts are provided by residues glycine 84, 87–88, threonine 92, 94–97, 112–120, and serine 124; these read GD, NIST, and KHGGRSVSS. Glycine 84 serves as a coordination point for anthranilate. Residue serine 96 participates in Mg(2+) binding. Anthranilate is bound at residue arginine 170. Mg(2+) is bound by residues aspartate 229 and glutamate 230.

Belongs to the anthranilate phosphoribosyltransferase family. As to quaternary structure, homodimer. Mg(2+) serves as cofactor.

It carries out the reaction N-(5-phospho-beta-D-ribosyl)anthranilate + diphosphate = 5-phospho-alpha-D-ribose 1-diphosphate + anthranilate. The protein operates within amino-acid biosynthesis; L-tryptophan biosynthesis; L-tryptophan from chorismate: step 2/5. Catalyzes the transfer of the phosphoribosyl group of 5-phosphorylribose-1-pyrophosphate (PRPP) to anthranilate to yield N-(5'-phosphoribosyl)-anthranilate (PRA). This chain is Anthranilate phosphoribosyltransferase, found in Verminephrobacter eiseniae (strain EF01-2).